The following is a 210-amino-acid chain: MLLWGRWKVVAGLAGLALSLELLLRYMRRRKPIREVLFFPAPVTCIEPVLYPMKQCSCPLPHTDSAFSRLLLLLLRAQRSLELCVFTFSCPSLARAVLLLHSRGVRVRVITDNDYMAASGSQIGPLRSAGVAVRHDQSSGYMHHKFAVVDGTVVLTGSLNWTVQATQTNRENILITDDRVIVKAYQQEFERLWQEYDPASYDFFPEKENK.

The Mitochondrial intermembrane portion of the chain corresponds to 1 to 6 (MLLWGR). Residues 7–24 (WKVVAGLAGLALSLELLL) traverse the membrane as a helical segment. Topologically, residues 25–210 (RYMRRRKPIR…YDFFPEKENK (186 aa)) are cytoplasmic. A PLD phosphodiesterase domain is found at 138–165 (SSGYMHHKFAVVDGTVVLTGSLNWTVQA). Active-site residues include His143, Lys145, and Asp150.

Belongs to the phospholipase D family. MitoPLD/Zucchini subfamily. Homodimer.

The protein resides in the mitochondrion outer membrane. It carries out the reaction a cardiolipin + H2O = a 1,2-diacyl-sn-glycero-3-phospho-(1'-sn-glycerol) + a 1,2-diacyl-sn-glycero-3-phosphate + H(+). In terms of biological role, presents phospholipase and nuclease activities, depending on the different physiological conditions. Plays a key role in mitochondrial fusion and fission via its phospholipase activity. In its phospholipase role, it uses the mitochondrial lipid cardiolipin as substrate to generate phosphatidate (PA or 1,2-diacyl-sn-glycero-3-phosphate), a second messenger signaling lipid. Production of PA facilitates Mitofusin-mediated fusion, whereas the cleavage of PA by the Lipin family of phosphatases produces diacylgycerol (DAG) which promotes mitochondrial fission. Regulates mitochondrial shape through facilitating mitochondrial fusion. During spermatogenesis, plays a critical role in PIWI-interacting RNA (piRNA) biogenesis. piRNAs provide essential protection against the activity of mobile genetic elements. piRNA-mediated transposon silencing is thus critical for maintaining genome stability, in particular in germline cells when transposons are mobilized as a consequence of wide-spread genomic demethylation. Has been shown to be a backbone-non-specific, single strand-specific nuclease, cleaving either RNA or DNA substrates with similar affinity. Produces 5' phosphate and 3' hydroxyl termini, suggesting it could directly participate in the processing of primary piRNA transcripts. Has been proposed to act as a cardiolipin hydrolase to generate phosphatidic acid at mitochondrial surface. Although it cannot be excluded that it can act as a phospholipase in some circumstances, this activity could not be confirmed. This is Mitochondrial cardiolipin hydrolase (pld6) from Xenopus tropicalis (Western clawed frog).